The primary structure comprises 428 residues: Patatin-like protein 3 (428 aa).

The region spanning 38–252 (LSIDGGGIRG…AANNPTLCAI (215 aa)) is the PNPLA domain. The GXGXXG motif lies at 42-47 (GGGIRG). Residues 80–84 (GTSTG) carry the GXSXG motif. The active-site Nucleophile is the serine 82. The active-site Proton acceptor is aspartate 239. A DGA/G motif is present at residues 239–241 (DGG). Serine 423 carries the phosphoserine modification.

The protein belongs to the patatin family. In terms of tissue distribution, expressed specifically in the stigma, ovary and funiculus of the ovary.

The protein localises to the cytoplasm. Functionally, possesses non-specific lipolytic acyl hydrolase (LAH) activity. Catalyzes the hydrolysis of the neutral lipids monogalactosyldiacylglycerol (MGDG), digalactosyldiacylglycerol (DGDG) and phosphatidylglycerol (PG), and less efficiently the polar lipids phosphatidylcholine (PC) and phosphatidylinositol (PI), but not the storage lipid triacylglycerol (TAG). May play a role in root development. This Arabidopsis thaliana (Mouse-ear cress) protein is Patatin-like protein 3 (PLP3).